We begin with the raw amino-acid sequence, 417 residues long: Histidine--tRNA ligase (417 aa).

It belongs to the class-II aminoacyl-tRNA synthetase family. Homodimer.

The protein resides in the cytoplasm. It catalyses the reaction tRNA(His) + L-histidine + ATP = L-histidyl-tRNA(His) + AMP + diphosphate + H(+). The chain is Histidine--tRNA ligase from Nitratidesulfovibrio vulgaris (strain ATCC 29579 / DSM 644 / CCUG 34227 / NCIMB 8303 / VKM B-1760 / Hildenborough) (Desulfovibrio vulgaris).